We begin with the raw amino-acid sequence, 254 residues long: Probable triosephosphate isomerase 2 (254 aa).

Asparagine 9–lysine 11 lines the substrate pocket. The Electrophile role is filled by histidine 96. The active-site Proton acceptor is the glutamate 168. Positions 174 and 212 each coordinate substrate.

The protein belongs to the triosephosphate isomerase family. In terms of assembly, homodimer.

It is found in the cytoplasm. It carries out the reaction D-glyceraldehyde 3-phosphate = dihydroxyacetone phosphate. The protein operates within carbohydrate biosynthesis; gluconeogenesis. Its pathway is carbohydrate degradation; glycolysis; D-glyceraldehyde 3-phosphate from glycerone phosphate: step 1/1. Functionally, involved in the gluconeogenesis. Catalyzes stereospecifically the conversion of dihydroxyacetone phosphate (DHAP) to D-glyceraldehyde-3-phosphate (G3P). This is Probable triosephosphate isomerase 2 from Listeria monocytogenes serovar 1/2a (strain ATCC BAA-679 / EGD-e).